Reading from the N-terminus, the 391-residue chain is Elongation factor Tu 2 (391 aa).

The tr-type G domain occupies 10-201 (KPHVNIGTIG…EVDNYIPTPE (192 aa)). The interval 19-26 (GHVDHGKT) is G1. 19–26 (GHVDHGKT) contributes to the GTP binding site. Thr26 is a binding site for Mg(2+). Residues 55–59 (GITIS) form a G2 region. The segment at 76–79 (DCPG) is G3. Residues 76-80 (DCPGH) and 131-134 (NKVD) contribute to the GTP site. Residues 131–134 (NKVD) are G4. Positions 169 to 171 (SAL) are G5.

It belongs to the TRAFAC class translation factor GTPase superfamily. Classic translation factor GTPase family. EF-Tu/EF-1A subfamily. In terms of assembly, monomer.

It is found in the cytoplasm. The enzyme catalyses GTP + H2O = GDP + phosphate + H(+). Functionally, GTP hydrolase that promotes the GTP-dependent binding of aminoacyl-tRNA to the A-site of ribosomes during protein biosynthesis. This Bartonella quintana (strain Toulouse) (Rochalimaea quintana) protein is Elongation factor Tu 2.